The chain runs to 197 residues: Chalcone--flavanone isomerase 2 (197 aa).

Residues threonine 23, asparagine 88, and threonine 165 each coordinate substrate.

The protein belongs to the chalcone isomerase family.

The catalysed reaction is a chalcone = a flavanone.. The protein operates within secondary metabolite biosynthesis; flavonoid biosynthesis. In terms of biological role, catalyzes the intramolecular cyclization of bicyclic chalcones into tricyclic (S)-flavanones. Responsible for the isomerization of 4,2',4',6'-tetrahydroxychalcone (also termed chalcone) into naringenin. This Medicago sativa (Alfalfa) protein is Chalcone--flavanone isomerase 2 (CHI2).